A 176-amino-acid polypeptide reads, in one-letter code: Flavodoxin 1 (176 aa).

Positions 4–165 constitute a Flavodoxin-like domain; the sequence is HGIFFGSDTG…RVEKWVKQIS (162 aa).

This sequence belongs to the flavodoxin family. It depends on FMN as a cofactor.

In terms of biological role, low-potential electron donor to a number of redox enzymes. The polypeptide is Flavodoxin 1 (fldA) (Shigella flexneri).